The following is a 393-amino-acid chain: Protein shisa-9B (393 aa).

Residues 1-20 (MKSTGLLLGYFLMKVLVCDA) form the signal peptide. The Extracellular segment spans residues 21 to 131 (EGEPGKSLDG…MDQHDPTKDK (111 aa)). The interval 28-52 (LDGAVTASGSNDSRDGENGLSETPH) is disordered. An N-linked (GlcNAc...) asparagine glycan is attached at N38. Residues 132-152 (TNLIVYIICGVVAIMALVGIF) traverse the membrane as a helical segment. At 153–393 (TKLGLEKAHR…VTNSKTEVTV (241 aa)) the chain is on the cytoplasmic side. The segment at 307 to 340 (QKQNGHKSKSTKVHSSHPLAYGSNTIANPGRMSS) is disordered. Over residues 310–321 (NGHKSKSTKVHS) the composition is skewed to basic residues.

It belongs to the shisa family. SHISA9 subfamily. As to quaternary structure, component of some AMPA receptors (ionotropic glutamate receptors) complex.

It is found in the cell projection. Its subcellular location is the dendritic spine membrane. It localises to the synapse. Functionally, regulator of short-term neuronal synaptic plasticity in the dentate gyrus. Associates with AMPA receptors (ionotropic glutamate receptors) in synaptic spines and promotes AMPA receptor desensitization at excitatory synapses. This chain is Protein shisa-9B (shisa9b), found in Danio rerio (Zebrafish).